Reading from the N-terminus, the 79-residue chain is D-alanyl carrier protein (79 aa).

The 77-residue stretch at 1–77 (MTVEEKIIDA…KIVEGVKELQ (77 aa)) folds into the Carrier domain. Residue serine 35 is modified to O-(pantetheine 4'-phosphoryl)serine.

Belongs to the DltC family. Post-translationally, 4'-phosphopantetheine is transferred from CoA to a specific serine of apo-DCP.

The protein resides in the cytoplasm. It functions in the pathway cell wall biogenesis; lipoteichoic acid biosynthesis. Functionally, carrier protein involved in the D-alanylation of lipoteichoic acid (LTA). The loading of thioester-linked D-alanine onto DltC is catalyzed by D-alanine--D-alanyl carrier protein ligase DltA. The DltC-carried D-alanyl group is further transferred to cell membrane phosphatidylglycerol (PG) by forming an ester bond, probably catalyzed by DltD. D-alanylation of LTA plays an important role in modulating the properties of the cell wall in Gram-positive bacteria, influencing the net charge of the cell wall. The sequence is that of D-alanyl carrier protein from Streptococcus uberis (strain ATCC BAA-854 / 0140J).